Consider the following 587-residue polypeptide: Putative adenylate cyclase 3 (587 aa).

In terms of domain architecture, Guanylate cyclase spans 12 to 127 (AILAADAVGY…DGVNVAARIE (116 aa)). 5 TPR repeats span residues 343 to 376 (LLVR…DPGM), 421 to 454 (PQGH…DPNS), 455 to 488 (ANAY…DPQF), 490 to 522 (LSLH…APRS), and 524 to 556 (MTRF…NPSF).

Belongs to the adenylyl cyclase class-3 family.

The enzyme catalyses ATP = 3',5'-cyclic AMP + diphosphate. The chain is Putative adenylate cyclase 3 (cya3) from Rhizobium meliloti (strain 1021) (Ensifer meliloti).